The primary structure comprises 122 residues: Large ribosomal subunit protein bL12 (122 aa).

The protein belongs to the bacterial ribosomal protein bL12 family. Homodimer. Part of the ribosomal stalk of the 50S ribosomal subunit. Forms a multimeric L10(L12)X complex, where L10 forms an elongated spine to which 2 to 4 L12 dimers bind in a sequential fashion. Binds GTP-bound translation factors.

Its function is as follows. Forms part of the ribosomal stalk which helps the ribosome interact with GTP-bound translation factors. Is thus essential for accurate translation. The sequence is that of Large ribosomal subunit protein bL12 from Latilactobacillus sakei subsp. sakei (strain 23K) (Lactobacillus sakei subsp. sakei).